The following is a 119-amino-acid chain: MSISKDDILNAVAEMSVMDVVALIEAMEEKFGVSASAAVAAAGPAEAADEQTEFNVVMTSFGEKKVAVIKAVRGATGLGLKEAKDLVESLGVVKEGVEKAEAEELKKTLEEAGASVEIK.

It belongs to the bacterial ribosomal protein bL12 family. As to quaternary structure, homodimer. Part of the ribosomal stalk of the 50S ribosomal subunit. Forms a multimeric L10(L12)X complex, where L10 forms an elongated spine to which 2 to 4 L12 dimers bind in a sequential fashion. Binds GTP-bound translation factors.

Its function is as follows. Forms part of the ribosomal stalk which helps the ribosome interact with GTP-bound translation factors. Is thus essential for accurate translation. This Colwellia psychrerythraea (strain 34H / ATCC BAA-681) (Vibrio psychroerythus) protein is Large ribosomal subunit protein bL12.